A 658-amino-acid chain; its full sequence is Threonine--tRNA ligase (658 aa).

The region spanning 1-64 (MSCSVSLSFP…GQSGQIEIIT (64 aa)) is the TGS domain. The catalytic stretch occupies residues 246–549 (DHRRLGREMD…LIENFAGHMP (304 aa)). The Zn(2+) site is built by Cys343, His394, and His526.

Belongs to the class-II aminoacyl-tRNA synthetase family. As to quaternary structure, homodimer. The cofactor is Zn(2+).

The protein resides in the cytoplasm. It carries out the reaction tRNA(Thr) + L-threonine + ATP = L-threonyl-tRNA(Thr) + AMP + diphosphate + H(+). In terms of biological role, catalyzes the attachment of threonine to tRNA(Thr) in a two-step reaction: L-threonine is first activated by ATP to form Thr-AMP and then transferred to the acceptor end of tRNA(Thr). Also edits incorrectly charged L-seryl-tRNA(Thr). In Bartonella quintana (strain Toulouse) (Rochalimaea quintana), this protein is Threonine--tRNA ligase.